We begin with the raw amino-acid sequence, 211 residues long: Glycerol-3-phosphate acyltransferase (211 aa).

The next 5 helical transmembrane spans lie at 10–30 (FTTWLIFLISYLIGSIPFGLL), 63–83 (ALTLLCDILKGTLVILVIKFL), 90–110 (NIFISLAGFFAFLGHLFPVWL), 126–146 (LGLYWPAAIVFITAWIVLFLI), and 152–172 (LSALIAVIITPIFVHFSYPYL).

The protein belongs to the PlsY family. As to quaternary structure, probably interacts with PlsX.

The protein localises to the cell inner membrane. The catalysed reaction is an acyl phosphate + sn-glycerol 3-phosphate = a 1-acyl-sn-glycero-3-phosphate + phosphate. The protein operates within lipid metabolism; phospholipid metabolism. Functionally, catalyzes the transfer of an acyl group from acyl-phosphate (acyl-PO(4)) to glycerol-3-phosphate (G3P) to form lysophosphatidic acid (LPA). This enzyme utilizes acyl-phosphate as fatty acyl donor, but not acyl-CoA or acyl-ACP. This Bartonella henselae (strain ATCC 49882 / DSM 28221 / CCUG 30454 / Houston 1) (Rochalimaea henselae) protein is Glycerol-3-phosphate acyltransferase.